A 258-amino-acid polypeptide reads, in one-letter code: Snake venom serine proteinase 8 (258 aa).

Positions 1–18 (MVLIRVLANLLILQLSYA) are cleaved as a signal peptide. Positions 19–24 (QKSSEL) are excised as a propeptide. Residues 25–249 (VIGGDECNIN…YNDWIQSIIA (225 aa)) form the Peptidase S1 domain. Disulfide bonds link Cys31–Cys163, Cys50–Cys66, Cys98–Cys256, Cys142–Cys210, Cys174–Cys189, and Cys200–Cys225. Asn44 is a glycosylation site (N-linked (GlcNAc...) asparagine). Catalysis depends on charge relay system residues His65 and Asp110. Ser204 acts as the Charge relay system in catalysis.

This sequence belongs to the peptidase S1 family. Snake venom subfamily. Monomer. Expressed by the venom gland.

It is found in the secreted. Its function is as follows. Snake venom serine protease that may act in the hemostasis system of the prey. The sequence is that of Snake venom serine proteinase 8 from Crotalus adamanteus (Eastern diamondback rattlesnake).